Consider the following 182-residue polypeptide: Autophagy-related protein 31 (182 aa).

Positions 105–134 (LTSGNDTGGDAGKKSGDISDPAAGPDVPRE) are disordered.

It is found in the cytoplasm. The protein localises to the cytoskeleton. The protein resides in the preautophagosomal structure. Plays a role in starvation-induced autophagy. Involved in mitophagy. Functions with ATG17 and ATG29 at the preautophagosomal structure (PAS) in order to form normal autophagosomes under starvation conditions. May be involved in microtubule function, such as chromosome segregation and karyogamy. The chain is Autophagy-related protein 31 (CIS1) from Candida glabrata (strain ATCC 2001 / BCRC 20586 / JCM 3761 / NBRC 0622 / NRRL Y-65 / CBS 138) (Yeast).